Consider the following 1437-residue polypeptide: Myomesin-3 (1437 aa).

The tract at residues 1–49 (MTLPHSLGGAGDPRPPQAMEVHRLEHRQEEEQKEERQHSLRMGSSVRRR) is disordered. Residues 20-38 (EVHRLEHRQEEEQKEERQH) show a composition bias toward basic and acidic residues. A coiled-coil region spans residues 120–149 (RLLRQRRDWKTLRRRTEEKVQEAKELRELC). Ig-like C2-type domains are found at residues 154-246 (PWFW…AKVL) and 269-361 (PSVE…TYVL). Fibronectin type-III domains lie at 375–469 (SPLN…VMGD), 503–598 (PPTN…LRGP), 604–696 (PPAQ…VKQA), 702–797 (APYG…CKEW), and 804–899 (PPYD…LEDK). 2 Ig-like C2-type domains span residues 1120–1205 (PYFE…LDLT) and 1334–1423 (AKVV…VTIS).

Homodimer.

The protein localises to the cytoplasm. The protein resides in the myofibril. It is found in the sarcomere. Its subcellular location is the m line. Functionally, may link the intermediate filament cytoskeleton to the M-disk of the myofibrils in striated muscle. This is Myomesin-3 (MYOM3) from Homo sapiens (Human).